We begin with the raw amino-acid sequence, 140 residues long: Small ribosomal subunit protein uS19 (140 aa).

Belongs to the universal ribosomal protein uS19 family.

Protein S19 forms a complex with S13 that binds strongly to the 16S ribosomal RNA. The sequence is that of Small ribosomal subunit protein uS19 (rps19) from Saccharolobus solfataricus (strain ATCC 35092 / DSM 1617 / JCM 11322 / P2) (Sulfolobus solfataricus).